We begin with the raw amino-acid sequence, 197 residues long: Dephospho-CoA kinase (197 aa).

The 196-residue stretch at 2-197 (IIGITGGIAS…SALLSLANPR (196 aa)) folds into the DPCK domain. 10-15 (ASGKST) lines the ATP pocket.

Belongs to the CoaE family.

It localises to the cytoplasm. It carries out the reaction 3'-dephospho-CoA + ATP = ADP + CoA + H(+). It functions in the pathway cofactor biosynthesis; coenzyme A biosynthesis; CoA from (R)-pantothenate: step 5/5. In terms of biological role, catalyzes the phosphorylation of the 3'-hydroxyl group of dephosphocoenzyme A to form coenzyme A. This chain is Dephospho-CoA kinase, found in Streptococcus pyogenes serotype M28 (strain MGAS6180).